The sequence spans 500 residues: Trehalose-6-phosphate synthase (500 aa).

Arg-28 provides a ligand contact to D-glucose 6-phosphate. Position 48–49 (48–49 (GG)) interacts with UDP-alpha-D-glucose. Residues Tyr-108 and Asp-162 each coordinate D-glucose 6-phosphate. Arg-304 and Lys-309 together coordinate UDP-alpha-D-glucose. Arg-342 serves as a coordination point for D-glucose 6-phosphate. 407-411 (LVAKE) serves as a coordination point for UDP-alpha-D-glucose.

It belongs to the glycosyltransferase 20 family. In terms of assembly, homotetramer.

The catalysed reaction is ADP-alpha-D-glucose + D-glucose 6-phosphate = alpha,alpha-trehalose 6-phosphate + ADP + H(+). It catalyses the reaction CDP-alpha-D-glucose + D-glucose 6-phosphate = alpha,alpha-trehalose 6-phosphate + CDP + H(+). It carries out the reaction GDP-alpha-D-glucose + D-glucose 6-phosphate = alpha,alpha-trehalose 6-phosphate + GDP + H(+). The enzyme catalyses TDP-alpha-D-glucose + D-glucose 6-phosphate = 5-methyl-UDP + alpha,alpha-trehalose 6-phosphate + H(+). The catalysed reaction is D-glucose 6-phosphate + UDP-alpha-D-glucose = alpha,alpha-trehalose 6-phosphate + UDP + H(+). Its pathway is glycan biosynthesis; trehalose biosynthesis. Probably involved in the osmoprotection via the biosynthesis of trehalose and in the production of glycogen and alpha-glucan via the TreS-Pep2 branch involved in the biosynthesis of maltose-1-phosphate (M1P). Catalyzes the transfer of glucose from UDP-glucose (UDP-Glc) to D-glucose 6-phosphate (Glc-6-P) to form trehalose-6-phosphate. Probably also able to use ADP-Glc, CDP-Glc, GDP-Glc and TDP-Glc as glucosyl donors. The protein is Trehalose-6-phosphate synthase of Mycobacterium bovis (strain ATCC BAA-935 / AF2122/97).